The primary structure comprises 179 residues: NAD(P)H-quinone oxidoreductase subunit J (179 aa).

It belongs to the complex I 30 kDa subunit family. NDH-1 can be composed of about 15 different subunits; different subcomplexes with different compositions have been identified which probably have different functions. In at one experiment the initiator methionine has been seen to be kept and removed.

Its subcellular location is the cellular thylakoid membrane. It carries out the reaction a plastoquinone + NADH + (n+1) H(+)(in) = a plastoquinol + NAD(+) + n H(+)(out). It catalyses the reaction a plastoquinone + NADPH + (n+1) H(+)(in) = a plastoquinol + NADP(+) + n H(+)(out). Functionally, NDH-1 shuttles electrons from an unknown electron donor, via FMN and iron-sulfur (Fe-S) centers, to quinones in the respiratory and/or the photosynthetic chain. The immediate electron acceptor for the enzyme in this species is believed to be plastoquinone. Couples the redox reaction to proton translocation, and thus conserves the redox energy in a proton gradient. Cyanobacterial NDH-1 also plays a role in inorganic carbon-concentration. This is NAD(P)H-quinone oxidoreductase subunit J from Synechocystis sp. (strain ATCC 27184 / PCC 6803 / Kazusa).